The sequence spans 369 residues: Tetraacyldisaccharide 4'-kinase (369 aa).

52-59 (TVGGTGKT) provides a ligand contact to ATP.

Belongs to the LpxK family.

It catalyses the reaction a lipid A disaccharide + ATP = a lipid IVA + ADP + H(+). It participates in glycolipid biosynthesis; lipid IV(A) biosynthesis; lipid IV(A) from (3R)-3-hydroxytetradecanoyl-[acyl-carrier-protein] and UDP-N-acetyl-alpha-D-glucosamine: step 6/6. Functionally, transfers the gamma-phosphate of ATP to the 4'-position of a tetraacyldisaccharide 1-phosphate intermediate (termed DS-1-P) to form tetraacyldisaccharide 1,4'-bis-phosphate (lipid IVA). The polypeptide is Tetraacyldisaccharide 4'-kinase (Parabacteroides distasonis (strain ATCC 8503 / DSM 20701 / CIP 104284 / JCM 5825 / NCTC 11152)).